A 401-amino-acid polypeptide reads, in one-letter code: MAKVLCVLYDDPVDGYPKTYARDDLPKIDHYPGGQTLPTPKAIDFTPGQLLGSVSGELGLRKYLESNGHTLVVTSDKDGPDSVFERELVDADVVISQPFWPAYLTPERIAKAKNLKLALTAGIGSDHVDLQSAIDRNVTVAEVTYCNSISVAEHVVMMILSLVRNYLPSHEWARKGGWNIADCVSHAYDLEAMHVGTVAAGRIGLAVLRRLAPFDVHLHYTDRHRLPESVEKELNLTWHATREDMYPVCDVVTLNCPLHPETEHMINDETLKLFKRGAYIVNTARGKLCDRDAVARALESGRLAGYAGDVWFPQPAPKDHPWRTMPYNGMTPHISGTTLTAQARYAAGTREILECFFEGRPIRDEYLIVQGGALAGTGAHSYSKGNATGGSEEAAKFKKAV.

Isoleucine 123 and asparagine 147 together coordinate substrate. NAD(+) is bound by residues serine 148, 202–203 (RI), aspartate 222, 257–261 (PLHPE), threonine 283, aspartate 309, 333–336 (HISG), and serine 381.

It belongs to the D-isomer specific 2-hydroxyacid dehydrogenase family. FDH subfamily. In terms of assembly, homodimer.

The protein resides in the cytoplasm. The catalysed reaction is formate + NAD(+) = CO2 + NADH. Catalyzes the NAD(+)-dependent oxidation of formate to carbon dioxide. Formate oxidation is the final step in the methanol oxidation pathway in methylotrophic microorganisms. Has a role in the detoxification of exogenous formate in non-methylotrophic organisms. The sequence is that of Formate dehydrogenase from Pseudomonas sp. (strain 101) (Achromobacter parvulus T1).